The chain runs to 549 residues: Protein wntless homolog (549 aa).

The signal sequence occupies residues 1 to 34; it reads MAGGAVIENLSNRKLFVIFAGLLVIQIMFFLIGA. The Lumenal segment spans residues 36 to 236; the sequence is YAPSPSSYME…RLIEIHQNGG (201 aa). The chain crosses the membrane as a helical span at residues 237-257; the sequence is FTLVWLWTKTFMTPVVAICLW. Residues 258-275 lie on the Cytoplasmic side of the membrane; that stretch reads WYYNRINQLARNPLLLER. A helical transmembrane segment spans residues 276-296; sequence AILLLGLSLVILDFPIEWISL. The Lumenal segment spans residues 297-310; the sequence is TYRIPFLLLISDLR. Residues 311 to 331 traverse the membrane as a helical segment; it reads QGLFYTVLFSFWLIFAGEHLI. Residues 332-345 lie on the Cytoplasmic side of the membrane; sequence DDNTRNNLKSYRFN. Residues 346-366 traverse the membrane as a helical segment; sequence LSFIITASLGLLIYDLIERGI. Residues 367–383 are Lumenal-facing; that stretch reads QLYDPFYSVWSSPTGSQ. A helical membrane pass occupies residues 384 to 404; sequence IAYFAIFISAISTVAYFIFLF. At 405–439 the chain is on the cytoplasmic side; that stretch reads FKIARVWSTIKSKRSAQIYQTSENRRLKVEGVIYR. The chain crosses the membrane as a helical span at residues 440-460; that stretch reads FKFLMLFTLLCSAFTIAAYFM. Residues 461–483 lie on the Lumenal side of the membrane; sequence KQYGEAQLHGDEARDGFLTGSTS. The helical transmembrane segment at 484–504 threads the bilayer; it reads AFFTGAFGMCNIYVLLLLAMY. Topologically, residues 505-549 are cytoplasmic; sequence APSHKHYRGASQLIDENDDDEIMEDPSNQHTESNAMTTFLKPSTD. A disordered region spans residues 524-549; sequence DEIMEDPSNQHTESNAMTTFLKPSTD. The span at 530–549 shows a compositional bias: polar residues; sequence PSNQHTESNAMTTFLKPSTD.

It belongs to the wntless family. In terms of tissue distribution, expressed in the tail hypodermis, stomatointestinal muscle, the mesoblast cell M and its descendants, CAN neurons, the developing vulva, the pharynx and the pharyngeal intestinal valve.

Its subcellular location is the cell membrane. It is found in the early endosome membrane. The protein resides in the golgi apparatus membrane. It localises to the basal cell membrane. The protein localises to the late endosome membrane. Probable sorting receptor which regulates endocytosis and secretion of the wnt ligand egl-20. Recycling of mig-14 from the plasma membrane to the Golgi apparatus by the retromer complex is essential for its function. Its endosomal trafficking is regulated by its association with sorting nexin snx-3 on early endosomes and the mtm-6/mtm-9 myotubularin complex. Required in embryonic development for endoderm specification and the correct positioning and orientation of the mitotic spindles and division planes in blastomere cells. Functions during vulval development, playing a role in vulval precursor cell fate specification. During development, specifically regulates the migration of HSN neurons, the left Q neuroblast (QL) and its descendants and the distal tip cells of the gonads. Positioning of Q neuroblasts may be both dependent and independent of hox gene mab-5. Involved in establishing ALM and PLM neuronal cell polarity. The polypeptide is Protein wntless homolog (Caenorhabditis elegans).